The chain runs to 474 residues: MTRMTRHLALWMLLSLAILASQSAMAQKLPDFTSLVEEAAPAVVNISTSRTVETRNMPFGQFGGQELPEIFKHFFGERFGDQMPMPPGAQGHSEERRSLGSGFIISEDGYIMTNAHVVEGADEILVSLNDGRELKAELVGADTKTDVAVLKVDADNLPTLTLGDSEDLKVGQWVAAIGSPFGLDHSVTSGIISAINRTLPRDVYVPFIQTDVAINPGNSGGPLFNLDGEVIGINSQIFTRSGGYMGLSFAIPIDVAMDVADQLRNDGSVSRGWLGVMIQPVSRELADSFGMDKPQGALIADLDPDGPAARDGLKAGDVVLEVDGQTVDSSSALPRLIGRVSPGNDVELKVLRNGEHRNVTVTVGDWPDSQKGAGGSAGDTAPARLGLAVRPLEEGQHDQAIDNGVRVVEVDPTGVAAKAGIRAGDILVSIGEHAVESPEQLSELIGELPEDRAVPVRLYRSGHSYYVALRLAQK.

An N-terminal signal peptide occupies residues 1–26; sequence MTRMTRHLALWMLLSLAILASQSAMA. Residues His-116, Asp-146, and Ser-219 each act as charge relay system in the active site. Substrate-binding positions include 217–219 and 274–278; these read GNS and LGVMI. PDZ domains follow at residues 263–354 and 360–462; these read LRND…LRNG and TVTV…YRSG.

The protein belongs to the peptidase S1C family.

Its subcellular location is the periplasm. The enzyme catalyses Acts on substrates that are at least partially unfolded. The cleavage site P1 residue is normally between a pair of hydrophobic residues, such as Val-|-Val.. Might be efficient in the degradation of transiently denatured and unfolded proteins which accumulate in the periplasm following stress conditions. This Halomonas elongata (strain ATCC 33173 / DSM 2581 / NBRC 15536 / NCIMB 2198 / 1H9) protein is Probable periplasmic serine endoprotease DegP-like (mucD).